The primary structure comprises 414 residues: Probable sugar phosphate/phosphate translocator At1g06470 (414 aa).

Transmembrane regions (helical) follow at residues 72-92 (VLKTLFFILVWYTFSTFLTLY), 101-121 (LGKFPAPLLMNTIHFSIQAVL), 172-192 (TFATMCKSAAPIFLLLFAFAF), 197-217 (PSLKLFGIISVISAGVLLTVA), 224-244 (FWGFVFVMLAAVMSGFRWCMT), 259-279 (FIFMSCVAPVMAIATGLLSLL), 303-323 (FLMLFGGALAFCMVLTEYVLV), 328-348 (AVTVTIAGVVKEAVTIVVAVF), and 354-374 (FTWLKGVGLMIIMVGVSLFNW). The 111-residue stretch at 106 to 216 (APLLMNTIHF…VISAGVLLTV (111 aa)) folds into the EamA domain.

Belongs to the TPT transporter family. TPT (TC 2.A.7.9) subfamily.

It is found in the membrane. The protein is Probable sugar phosphate/phosphate translocator At1g06470 of Arabidopsis thaliana (Mouse-ear cress).